Consider the following 1499-residue polypeptide: Streptococcal surface protein B (1499 aa).

Residues 1-37 (MQKREVFGFRKSKVAKTLCGAVLGAALIAIADQQVLA) form the signal peptide. Residues 50-84 (AVTTTGNPATNLPEAQGEATEAASQSQAQAGSKDG) are disordered. 4 Ag I/II A repeats span residues 145-219 (KKTT…QKAN), 220-301 (EDSQ…KKAK), 302-383 (EDND…KQAN), and 384-465 (ATNE…KKDF). Disordered regions lie at residues 689-709 (YADSSNAEKSRGARWDTSEWD), 763-907 (TAPT…TPPV), and 1409-1472 (RTTT…TGTN). The segment covering 694-705 (NAEKSRGARWDT) has biased composition (basic and acidic residues). A compositionally biased stretch (pro residues) spans 789 to 799 (PTPPVKTPDQP). Positions 800–815 (EPSKPEEPTYETEKPL) are enriched in basic and acidic residues. A compositionally biased stretch (pro residues) spans 828 to 838 (PTPPVKIPDQP). Basic and acidic residues predominate over residues 839–854 (EPSKPEEPTYETEKPL). Pro residues-rich tracts occupy residues 867 to 877 (PTPPVKTPDQP) and 888 to 907 (DPLPTPPLAPTPKQLPTPPV). Residues 1428–1450 (KPKDPDKPETPKEPKVPSPKVED) are compositionally biased toward basic and acidic residues. The short motif at 1466–1470 (LPKTG) is the LPXTG sorting signal element. At T1469 the chain carries Pentaglycyl murein peptidoglycan amidated threonine. The propeptide at 1470–1499 (GTNDATYMPYLGLAALVGFLGLGLAKRKED) is removed by sortase.

This sequence belongs to the antigen I/II family.

The protein localises to the secreted. It localises to the cell wall. The protein resides in the cell surface. In terms of biological role, adhesin that mediates binding of bacteria to a variety of host cells. Plays a role in the bacterial invasion of dentinal tubules. A host immunostimulatory component, it modulates the innate immunity response. Plays a protective role against some antibiotics and cationic antimicrobial peptides (histatin-5, HTN3, but not beta-defensin 4A, DEFB4A). This is Streptococcal surface protein B from Streptococcus gordonii (strain Challis / ATCC 35105 / BCRC 15272 / CH1 / DL1 / V288).